A 188-amino-acid polypeptide reads, in one-letter code: Gag polyprotein (188 aa).

Positions 77–90 (VGETTVQRDAKMAP) are enriched in basic and acidic residues. The segment at 77-99 (VGETTVQRDAKMAPEETATPKTV) is disordered. Residues 121–124 (PPPY) carry the PPXY motif motif. The interval 130-166 (YPSLAGVGEQQGQGGDTPRGAEQPRAEPGHAGLAPGP) is disordered.

Specific enzymatic cleavages in vivo yield mature proteins.

Its subcellular location is the virion. This Galliformes (EV-2) protein is Gag polyprotein (ev-2).